Consider the following 501-residue polypeptide: ATP synthase subunit alpha (501 aa).

169–176 (GDRQTGKT) contacts ATP.

This sequence belongs to the ATPase alpha/beta chains family. As to quaternary structure, F-type ATPases have 2 components, CF(1) - the catalytic core - and CF(0) - the membrane proton channel. CF(1) has five subunits: alpha(3), beta(3), gamma(1), delta(1), epsilon(1). CF(0) has three main subunits: a(1), b(2) and c(9-12). The alpha and beta chains form an alternating ring which encloses part of the gamma chain. CF(1) is attached to CF(0) by a central stalk formed by the gamma and epsilon chains, while a peripheral stalk is formed by the delta and b chains.

It localises to the cell membrane. The enzyme catalyses ATP + H2O + 4 H(+)(in) = ADP + phosphate + 5 H(+)(out). Functionally, produces ATP from ADP in the presence of a proton gradient across the membrane. The alpha chain is a regulatory subunit. In Streptococcus pyogenes serotype M2 (strain MGAS10270), this protein is ATP synthase subunit alpha.